The chain runs to 92 residues: Small ribosomal subunit protein bS20 (92 aa).

Positions 1-23 (MANTPSAKKRAKQAEKRRSHNAS) are disordered. The segment covering 7–20 (AKKRAKQAEKRRSH) has biased composition (basic residues).

It belongs to the bacterial ribosomal protein bS20 family.

Binds directly to 16S ribosomal RNA. The sequence is that of Small ribosomal subunit protein bS20 from Pseudomonas entomophila (strain L48).